The following is a 1089-amino-acid chain: SUMO-specific isopeptidase USPL1 (1089 aa).

Residues 90-128 (LISPDSEDCPTPSKPQKRKRLETNCRNSPLPVHSKKTRS) form a disordered region. One can recognise a USP domain in the interval 215 to 488 (VQWKNTQALC…ETHIVIWERK (274 aa)). C224 serves as the catalytic Nucleophile. An SUMO-binding region spans residues 224-483 (CWLDCILSAL…EVPASETHIV (260 aa)). The active-site Proton acceptor is the H444. Disordered stretches follow at residues 687–739 (DSQT…KEDQ), 791–817 (ISRRSKRMSRKAKHMEELSPRNSSPPL), 835–868 (LREQEGSRPAPLRHRSPGNESAISPASRGDAAED), and 891–928 (LISSPHREPSLSDHSEPASHCGTPASDQSEPVSHCGSP). Polar residues predominate over residues 719 to 733 (TASSKTVAARSAQNQ). The span at 791–803 (ISRRSKRMSRKAK) shows a compositional bias: basic residues. S894 carries the post-translational modification Phosphoserine. A compositionally biased stretch (basic and acidic residues) spans 895-907 (PHREPSLSDHSEP).

The protein belongs to the peptidase C19 family. As to quaternary structure, interacts with ELL.

Its subcellular location is the nucleus. It is found in the cajal body. SUMO-specific isopeptidase involved in protein desumoylation. Specifically binds SUMO proteins with a higher affinity for SUMO2 and SUMO3 which it cleaves more efficiently. Also able to process full-length SUMO proteins to their mature forms. Plays a key role in RNA polymerase-II-mediated snRNA transcription in the Cajal bodies. Is a component of complexes that can bind to U snRNA genes. This is SUMO-specific isopeptidase USPL1 (Uspl1) from Mus musculus (Mouse).